The primary structure comprises 318 residues: 2-keto-3-deoxygluconate permease (318 aa).

10 consecutive transmembrane segments (helical) span residues 10–30 (LPGG…TLWP), 42–62 (GLIS…GATI), 82–102 (IAVA…GGVS), 109–129 (LSVL…YAAL), 139–159 (AGAV…LILG), 163–183 (LASF…LGFA), 201–221 (TLVP…TIAH), 224–244 (TSGV…LLLA), 257–277 (VAAS…AGMA), and 289–309 (ALVA…TALY).

It belongs to the KdgT transporter family.

Its subcellular location is the cell inner membrane. The catalysed reaction is 2-dehydro-3-deoxy-D-gluconate(in) + H(+)(in) = 2-dehydro-3-deoxy-D-gluconate(out) + H(+)(out). Functionally, catalyzes the proton-dependent uptake of 2-keto-3-deoxygluconate (KDG) into the cell. This Xanthomonas axonopodis pv. citri (strain 306) protein is 2-keto-3-deoxygluconate permease.